Reading from the N-terminus, the 1073-residue chain is Transmembrane protein 132E (1073 aa).

A signal peptide spans 1–33 (MGHFVVQGDLPWILCSLRLVIMIIAGKVSPTSS). Residues 34 to 899 (DALFSVPVPS…MTDLEIGMYA (866 aa)) are Extracellular-facing. Asn102 carries N-linked (GlcNAc...) asparagine glycosylation. Positions 246-270 (DPDSNDECGESYPRRGGPSRGESLS) are disordered. N-linked (GlcNAc...) asparagine glycans are attached at residues Asn324, Asn396, and Asn746. Residues 900 to 920 (LLGVFCLAILVFLINCIVFVL) form a helical membrane-spanning segment. Residues 921–1073 (KYRHKRIPPE…DYMRRIKEIA (153 aa)) lie on the Cytoplasmic side of the membrane. Residues 952-970 (TQSDLSPQTVESPSNTLEG) are compositionally biased toward polar residues. Residues 952 to 1024 (TQSDLSPQTV…PTSKRKRVKF (73 aa)) form a disordered region. Residues 982-994 (SGSSQTSVQSQVH) show a composition bias toward low complexity.

It belongs to the TMEM132 family.

It localises to the membrane. Functionally, required for normal inner ear hair cell function and hearing. The polypeptide is Transmembrane protein 132E (tmem132e) (Danio rerio (Zebrafish)).